Here is a 361-residue protein sequence, read N- to C-terminus: Ribosomal RNA large subunit methyltransferase M (361 aa).

Residues Ser187, 220–223, Asp239, Asp259, and Asp276 contribute to the S-adenosyl-L-methionine site; that span reads CPGG. Lys305 (proton acceptor) is an active-site residue.

Belongs to the class I-like SAM-binding methyltransferase superfamily. RNA methyltransferase RlmE family. RlmM subfamily. As to quaternary structure, monomer.

It is found in the cytoplasm. It catalyses the reaction cytidine(2498) in 23S rRNA + S-adenosyl-L-methionine = 2'-O-methylcytidine(2498) in 23S rRNA + S-adenosyl-L-homocysteine + H(+). Its function is as follows. Catalyzes the 2'-O-methylation at nucleotide C2498 in 23S rRNA. This is Ribosomal RNA large subunit methyltransferase M from Shewanella sp. (strain ANA-3).